Reading from the N-terminus, the 264-residue chain is Apolipoprotein A-I (264 aa).

An N-terminal signal peptide occupies residues M1–A18. 2 consecutive repeat copies span residues L67–G88 and P89–N110. A 10 X approximate tandem repeats region spans residues L67–Q264. Residue M109 is modified to Methionine sulfoxide. A 3; half-length repeat occupies K111–Q121. 3 repeat units span residues P122–E143, P144–V165, and P166–A187. One copy of the 7; truncated repeat lies at P188–N207. M193 bears the Methionine sulfoxide mark. Repeat 8 spans residues P208–K229. One copy of the 9; half-length repeat lies at P230–M240. Methionine sulfoxide is present on M240. Copy 10 of the repeat occupies P241–Q264.

It belongs to the apolipoprotein A1/A4/E family. In terms of assembly, homodimer. Interacts with APOA1BP and CLU. Component of a sperm activating protein complex (SPAP), consisting of APOA1, an immunoglobulin heavy chain, an immunoglobulin light chain and albumin. Interacts with NDRG1. Interacts with SCGB3A2. Interacts with NAXE and YJEFN3. In terms of processing, glycosylated. Post-translationally, palmitoylated. Phosphorylation sites are present in the extracellular medium.

It is found in the secreted. Participates in the reverse transport of cholesterol from tissues to the liver for excretion by promoting cholesterol efflux from tissues and by acting as a cofactor for the lecithin cholesterol acyltransferase (LCAT). As part of the SPAP complex, activates spermatozoa motility. This Nannospalax galili (Northern Israeli blind subterranean mole rat) protein is Apolipoprotein A-I (Apoa1).